The chain runs to 958 residues: Exosome complex exonuclease RRP44 (958 aa).

Met-1 is modified (N-acetylmethionine). Lys-18 carries the post-translational modification N6-acetyllysine. The 119-residue stretch at 64 to 182 (HYLLPDTNVL…FITNDRRNKE (119 aa)) folds into the PINc domain. Ser-215 bears the Phosphoserine mark. Residues 227-319 (IFSEHLPLSK…LHDEGQNEED (93 aa)) form the CSD1 domain. The CSD2 domain maps to 372–438 (LFTPADKRIP…ETEVLLLEHD (67 aa)). Residues 467 to 792 (REDLRHLCIC…ADVIVHRLLA (326 aa)) enclose the RNB domain. The tract at residues 938-958 (PTDTSNMDLNGPKKKKMKLGK) is disordered. Residues 949–958 (PKKKKMKLGK) are compositionally biased toward basic residues.

Belongs to the RNR ribonuclease family. Component of the RNA exosome complex; within the complex interacts with EXOSC4, EXOSC7 and EXOSC9 of the exosome core complex (Exo-9). The catalytically inactive RNA exosome core complex (Exo-9) associates with the catalytic subunit EXOSC10/RRP6. Exo-9 may associate with DIS3 to form the nucleolar exosome complex, or DIS3L to form the cytoplasmic exosome complex. Exo-9 is formed by a hexameric base ring consisting of the heterodimers EXOSC4-EXOSC9, EXOSC5-EXOSC8 and EXOSC6-EXOSC7, and a cap ring consisting of EXOSC1, EXOSC2 and EXOSC3; DIS3 associates with the base ring of Exo-9. The RNA exosome complex associates with cofactors C1D/RRP47, MPHOSPH6/MPP6 and MTREX/MTR4. Interacts with DHX34; the interaction is RNA-independent. Mg(2+) is required as a cofactor. It depends on Mn(2+) as a cofactor. In terms of tissue distribution, widely expressed.

The protein resides in the cytoplasm. Its subcellular location is the nucleus. It is found in the nucleolus. It localises to the nucleoplasm. Functionally, putative catalytic component of the RNA exosome complex which has 3'-&gt;5' exoribonuclease activity and participates in a multitude of cellular RNA processing and degradation events. In the nucleus, the RNA exosome complex is involved in proper maturation of stable RNA species such as rRNA, snRNA and snoRNA, in the elimination of RNA processing by-products and non-coding 'pervasive' transcripts, such as antisense RNA species and promoter-upstream transcripts (PROMPTs), and of mRNAs with processing defects, thereby limiting or excluding their export to the cytoplasm. The RNA exosome may be involved in Ig class switch recombination (CSR) and/or Ig variable region somatic hypermutation (SHM) by targeting AICDA deamination activity to transcribed dsDNA substrates. In the cytoplasm, the RNA exosome complex is involved in general mRNA turnover and specifically degrades inherently unstable mRNAs containing AU-rich elements (AREs) within their 3' untranslated regions, and in RNA surveillance pathways, preventing translation of aberrant mRNAs. It seems to be involved in degradation of histone mRNA. DIS3 has both 3'-5' exonuclease and endonuclease activities. This is Exosome complex exonuclease RRP44 (DIS3) from Homo sapiens (Human).